We begin with the raw amino-acid sequence, 131 residues long: Profilin (131 aa).

It belongs to the profilin family. In terms of assembly, occurs in many kinds of cells as a complex with monomeric actin in a 1:1 ratio.

The protein localises to the cytoplasm. It is found in the cytoskeleton. Binds to actin and affects the structure of the cytoskeleton. At high concentrations, profilin prevents the polymerization of actin, whereas it enhances it at low concentrations. By binding to PIP2, it inhibits the formation of IP3 and DG. This is Profilin from Cucumis melo (Muskmelon).